The sequence spans 129 residues: Small ribosomal subunit protein uS11 (129 aa).

It belongs to the universal ribosomal protein uS11 family. Part of the 30S ribosomal subunit. Interacts with proteins S7 and S18. Binds to IF-3.

In terms of biological role, located on the platform of the 30S subunit, it bridges several disparate RNA helices of the 16S rRNA. Forms part of the Shine-Dalgarno cleft in the 70S ribosome. This Synechococcus sp. (strain RCC307) protein is Small ribosomal subunit protein uS11.